We begin with the raw amino-acid sequence, 526 residues long: UDP-N-acetylmuramoyl-L-alanyl-D-glutamate--2,6-diaminopimelate ligase (526 aa).

The UDP-N-acetyl-alpha-D-muramoyl-L-alanyl-D-glutamate site is built by L48 and S50. G136–T142 contributes to the ATP binding site. UDP-N-acetyl-alpha-D-muramoyl-L-alanyl-D-glutamate contacts are provided by residues T178–T179, S205, and R213. K245 carries the post-translational modification N6-carboxylysine. Residues R408, D432 to R435, G490, and E494 contribute to the meso-2,6-diaminopimelate site. The short motif at D432–R435 is the Meso-diaminopimelate recognition motif element.

The protein belongs to the MurCDEF family. MurE subfamily. The cofactor is Mg(2+). Carboxylation is probably crucial for Mg(2+) binding and, consequently, for the gamma-phosphate positioning of ATP.

Its subcellular location is the cytoplasm. It catalyses the reaction UDP-N-acetyl-alpha-D-muramoyl-L-alanyl-D-glutamate + meso-2,6-diaminopimelate + ATP = UDP-N-acetyl-alpha-D-muramoyl-L-alanyl-gamma-D-glutamyl-meso-2,6-diaminopimelate + ADP + phosphate + H(+). It participates in cell wall biogenesis; peptidoglycan biosynthesis. Functionally, catalyzes the addition of meso-diaminopimelic acid to the nucleotide precursor UDP-N-acetylmuramoyl-L-alanyl-D-glutamate (UMAG) in the biosynthesis of bacterial cell-wall peptidoglycan. This Corynebacterium efficiens (strain DSM 44549 / YS-314 / AJ 12310 / JCM 11189 / NBRC 100395) protein is UDP-N-acetylmuramoyl-L-alanyl-D-glutamate--2,6-diaminopimelate ligase.